Reading from the N-terminus, the 327-residue chain is Gibberellin 2-beta-dioxygenase 1 (327 aa).

A Fe2OG dioxygenase domain is found at Gln-171–Pro-276. Residues His-200, Asp-202, and His-257 each contribute to the Fe cation site. Arg-267 is an active-site residue.

The protein belongs to the iron/ascorbate-dependent oxidoreductase family. GA2OX subfamily. The cofactor is Fe cation. In terms of tissue distribution, predominantly expressed in roots, flowers, young fruits and seeds.

The catalysed reaction is gibberellin A1 + 2-oxoglutarate + O2 = gibberellin A8 + succinate + CO2. It functions in the pathway plant hormone biosynthesis; gibberellin biosynthesis. Catalyzes the 2-beta-hydroxylation of several biologically active gibberellins, leading to the homeostatic regulation of their endogenous level. Catabolism of gibberellins (GAs) plays a central role in plant development. Converts GA9/GA20 to GA51/GA29 and GA4/GA1 to GA34/GA8. The protein is Gibberellin 2-beta-dioxygenase 1 (GA2OX1) of Pisum sativum (Garden pea).